Consider the following 106-residue polypeptide: Cell division protein FtsB (106 aa).

Over 1-3 the chain is Cytoplasmic; the sequence is MRL. A helical membrane pass occupies residues 4–21; it reads LTLIFVALIALLQYPLWL. Residues 22-106 are Periplasmic-facing; the sequence is GKGSWLRVWD…SPPAALTGAQ (85 aa). Residues 31–73 adopt a coiled-coil conformation; the sequence is DLNQKIVAQKAVNAELKLRNDTLDAEVRDLKQGNAAIEERARS.

Belongs to the FtsB family. As to quaternary structure, part of a complex composed of FtsB, FtsL and FtsQ.

The protein resides in the cell inner membrane. Its function is as follows. Essential cell division protein. May link together the upstream cell division proteins, which are predominantly cytoplasmic, with the downstream cell division proteins, which are predominantly periplasmic. This chain is Cell division protein FtsB, found in Methylobacillus flagellatus (strain ATCC 51484 / DSM 6875 / VKM B-1610 / KT).